The sequence spans 247 residues: Coproheme decarboxylase (247 aa).

Fe-coproporphyrin III-binding positions include Arg129, 143-147 (YPMDK), His170, Gln183, and Ser221. Tyr143 is a catalytic residue.

This sequence belongs to the ChdC family. Type 1 subfamily. It depends on Fe-coproporphyrin III as a cofactor.

It carries out the reaction Fe-coproporphyrin III + 2 H2O2 + 2 H(+) = heme b + 2 CO2 + 4 H2O. It catalyses the reaction Fe-coproporphyrin III + H2O2 + H(+) = harderoheme III + CO2 + 2 H2O. The catalysed reaction is harderoheme III + H2O2 + H(+) = heme b + CO2 + 2 H2O. The protein operates within porphyrin-containing compound metabolism; protoheme biosynthesis. Its function is as follows. Involved in coproporphyrin-dependent heme b biosynthesis. Catalyzes the decarboxylation of Fe-coproporphyrin III (coproheme) to heme b (protoheme IX), the last step of the pathway. The reaction occurs in a stepwise manner with a three-propionate intermediate. The chain is Coproheme decarboxylase from Bacillus cereus (strain ATCC 10987 / NRS 248).